A 282-amino-acid chain; its full sequence is Shikimate dehydrogenase (NADP(+)) (282 aa).

Shikimate-binding positions include 15–17 and T62; that span reads SKS. The active-site Proton acceptor is the K66. Shikimate-binding residues include N87 and D103. Residues 127–131, 151–156, and M220 contribute to the NADP(+) site; these read GAGGA and NRTHTK. Y222 contributes to the shikimate binding site. G244 contributes to the NADP(+) binding site.

The protein belongs to the shikimate dehydrogenase family. Homodimer.

The enzyme catalyses shikimate + NADP(+) = 3-dehydroshikimate + NADPH + H(+). The protein operates within metabolic intermediate biosynthesis; chorismate biosynthesis; chorismate from D-erythrose 4-phosphate and phosphoenolpyruvate: step 4/7. Its function is as follows. Involved in the biosynthesis of the chorismate, which leads to the biosynthesis of aromatic amino acids. Catalyzes the reversible NADPH linked reduction of 3-dehydroshikimate (DHSA) to yield shikimate (SA). The chain is Shikimate dehydrogenase (NADP(+)) from Shewanella putrefaciens (strain CN-32 / ATCC BAA-453).